The chain runs to 349 residues: Phenylalanine--tRNA ligase alpha subunit (349 aa).

Glu-258 lines the Mg(2+) pocket.

Belongs to the class-II aminoacyl-tRNA synthetase family. Phe-tRNA synthetase alpha subunit type 1 subfamily. As to quaternary structure, tetramer of two alpha and two beta subunits. Mg(2+) is required as a cofactor.

The protein resides in the cytoplasm. It carries out the reaction tRNA(Phe) + L-phenylalanine + ATP = L-phenylalanyl-tRNA(Phe) + AMP + diphosphate + H(+). The polypeptide is Phenylalanine--tRNA ligase alpha subunit (Rickettsia africae (strain ESF-5)).